The following is a 338-amino-acid chain: Nicotinate-nucleotide--dimethylbenzimidazole phosphoribosyltransferase (338 aa).

The active-site Proton acceptor is the Glu-305.

This sequence belongs to the CobT family.

The enzyme catalyses 5,6-dimethylbenzimidazole + nicotinate beta-D-ribonucleotide = alpha-ribazole 5'-phosphate + nicotinate + H(+). The protein operates within nucleoside biosynthesis; alpha-ribazole biosynthesis; alpha-ribazole from 5,6-dimethylbenzimidazole: step 1/2. Its function is as follows. Catalyzes the synthesis of alpha-ribazole-5'-phosphate from nicotinate mononucleotide (NAMN) and 5,6-dimethylbenzimidazole (DMB). In Rhizobium johnstonii (strain DSM 114642 / LMG 32736 / 3841) (Rhizobium leguminosarum bv. viciae), this protein is Nicotinate-nucleotide--dimethylbenzimidazole phosphoribosyltransferase.